The chain runs to 498 residues: ATP synthase subunit beta, chloroplastic (498 aa).

Residue 172 to 179 coordinates ATP; the sequence is GGAGVGKT.

The protein belongs to the ATPase alpha/beta chains family. F-type ATPases have 2 components, CF(1) - the catalytic core - and CF(0) - the membrane proton channel. CF(1) has five subunits: alpha(3), beta(3), gamma(1), delta(1), epsilon(1). CF(0) has four main subunits: a(1), b(1), b'(1) and c(9-12).

The protein localises to the plastid. The protein resides in the chloroplast thylakoid membrane. It catalyses the reaction ATP + H2O + 4 H(+)(in) = ADP + phosphate + 5 H(+)(out). Produces ATP from ADP in the presence of a proton gradient across the membrane. The catalytic sites are hosted primarily by the beta subunits. The polypeptide is ATP synthase subunit beta, chloroplastic (Balaka seemannii).